We begin with the raw amino-acid sequence, 123 residues long: Small ribosomal subunit protein uS12c (123 aa).

It belongs to the universal ribosomal protein uS12 family. In terms of assembly, part of the 30S ribosomal subunit.

The protein resides in the plastid. Its subcellular location is the chloroplast. Its function is as follows. With S4 and S5 plays an important role in translational accuracy. Located at the interface of the 30S and 50S subunits. This is Small ribosomal subunit protein uS12c (rps12) from Chaetosphaeridium globosum (Charophycean green alga).